A 98-amino-acid polypeptide reads, in one-letter code: MNQERLYKVLLGPVISEKAAMAAEIANQAVFKVVSDASKSEIKAAVEKLFNVSVEGVRVLNVKGKTKRTRYGMGRRSDWKKAYVTLAEGSEIDFESGE.

It belongs to the universal ribosomal protein uL23 family. As to quaternary structure, part of the 50S ribosomal subunit. Contacts protein L29, and trigger factor when it is bound to the ribosome.

Its function is as follows. One of the early assembly proteins it binds 23S rRNA. One of the proteins that surrounds the polypeptide exit tunnel on the outside of the ribosome. Forms the main docking site for trigger factor binding to the ribosome. This is Large ribosomal subunit protein uL23 from Teredinibacter turnerae (strain ATCC 39867 / T7901).